The sequence spans 604 residues: Prostaglandin G/H synthase 2 (604 aa).

Positions 1–17 (MLARALLLCAALALGQA) are cleaved as a signal peptide. Residues 18-55 (ANPCCSNPCQNRGECLSVGFDRYKCDCTRTGYYGENCT) enclose the EGF-like domain. 4 cysteine pairs are disulfide-bonded: C21–C32, C22–C145, C26–C42, and C44–C54. An N-linked (GlcNAc...) asparagine glycan is attached at N53. Residue R106 participates in substrate binding. N130 carries N-linked (GlcNAc...) asparagine glycosylation. Catalysis depends on H193, which acts as the Proton acceptor. Y341 provides a ligand contact to substrate. The active-site For cyclooxygenase activity is Y371. H374 is a heme b binding site. N396 carries N-linked (GlcNAc...) asparagine glycosylation. An S-nitrosocysteine modification is found at C526. A disulfide bridge links C555 with C561. N-linked (GlcNAc...) asparagine glycosylation occurs at N580.

It belongs to the prostaglandin G/H synthase family. In terms of assembly, homodimer. The cofactor is heme b. In terms of processing, S-nitrosylation by NOS2 (iNOS) activates enzyme activity. S-nitrosylation may take place on different Cys residues in addition to Cys-526.

The protein localises to the microsome membrane. The protein resides in the endoplasmic reticulum membrane. It is found in the nucleus inner membrane. Its subcellular location is the nucleus outer membrane. The enzyme catalyses (5Z,8Z,11Z,14Z)-eicosatetraenoate + AH2 + 2 O2 = prostaglandin H2 + A + H2O. It catalyses the reaction (5Z,8Z,11Z,14Z)-eicosatetraenoate + 2 O2 = prostaglandin G2. The catalysed reaction is prostaglandin G2 + AH2 = prostaglandin H2 + A + H2O. It carries out the reaction (5Z,8Z,11Z,14Z,17Z)-eicosapentaenoate + 2 O2 = prostaglandin G3. The enzyme catalyses prostaglandin G3 + AH2 = prostaglandin H3 + A + H2O. It catalyses the reaction (8Z,11Z,14Z)-eicosatrienoate + 2 O2 = prostaglandin G1. The catalysed reaction is prostaglandin G1 + AH2 = prostaglandin H1 + A + H2O. It carries out the reaction 2-(5Z,8Z,11Z,14Z)-eicosatetraenoyl-sn-glycero-3-phosphoethanolamine + 2 O2 = 2-(prostaglandin G2)-sn-glycero-3-phosphoethanolamine. The enzyme catalyses 2-(prostaglandin G2)-sn-glycero-3-phosphoethanolamine + AH2 = 2-(prostaglandin H2)-sn-glycero-3-phosphoethanolamine + A + H2O. It catalyses the reaction 2-(5Z,8Z,11Z,14Z)-eicosatetraenoyl-sn-glycero-3-phosphocholine + 2 O2 = 2-(prostaglandin G2)-sn-glycero-3-phosphocholine. The catalysed reaction is 2-(prostaglandin G2)-sn-glycero-3-phosphocholine + AH2 = 2-(prostaglandin H2)-sn-glycero-3-phosphocholine + A + H2O. It carries out the reaction (15S)-hydroperoxy-(5Z,8Z,11Z,13E)-eicosatetraenoate + AH2 = (15S)-hydroxy-(5Z,8Z,11Z,13E)-eicosatetraenoate + A + H2O. The enzyme catalyses 2-(5Z,8Z,11Z,14Z)-eicosatetraenoyl-sn-glycero-3-phosphocholine + AH2 + O2 = 2-[(15S)-hydroxy-(5Z,8Z,11Z,13E)-eicosatetraenoyl]-sn-glycero-3-phosphocholine + A + H2O. It catalyses the reaction 2-(5Z,8Z,11Z,14Z)-eicosatetraenoyl-sn-glycero-3-phosphocholine + AH2 + O2 = 2-[(15R)-hydroxy-(5Z,8Z,11Z,13E)-eicosatetraenoyl]-sn-glycero-3-phosphocholine + A + H2O. The catalysed reaction is 2-(5Z,8Z,11Z,14Z)-eicosatetraenoyl-sn-glycero-3-phosphocholine + AH2 + O2 = 2-[(11R)-hydroxy-(5Z,8Z,12E,14Z)-eicosatetraenoyl]-sn-glycero-3-phosphocholine + A + H2O. It carries out the reaction (9Z,12Z)-octadecadienoate + AH2 + O2 = 9-hydroxy-(10E,12Z)-octadecadienoate + A + H2O. The enzyme catalyses (9Z,12Z)-octadecadienoate + AH2 + O2 = 13-hydroxy-(9Z,11E)-octadecadienoate + A + H2O. It catalyses the reaction (5Z,8Z,11Z,14Z)-eicosatetraenoate + AH2 + O2 = (15R)-hydroxy-(5Z,8Z,11Z,13E)-eicosatetraenoate + A + H2O. The catalysed reaction is (5Z,8Z,11Z,14Z)-eicosatetraenoate + AH2 + O2 = (11R)-hydroxy-(5Z,8Z,12E,14Z)-eicosatetraenoate + A + H2O. It carries out the reaction (5Z,8Z,11Z,14Z,17Z)-eicosapentaenoate + AH2 + O2 = (11R)-hydroxy-(5Z,8Z,12E,14Z,17Z)-eicosapentaenoate + A + H2O. The enzyme catalyses (5Z,8Z,11Z,14Z,17Z)-eicosapentaenoate + AH2 + O2 = (18S)-hydroxy-(5Z,8Z,11Z,14Z,16E)-eicosapentaenoate + A + H2O. It catalyses the reaction (5Z,8Z,11Z,14Z,17Z)-eicosapentaenoate + AH2 + O2 = (18R)-hydroxy-(5Z,8Z,11Z,14Z,16E)-eicosapentaenoate + A + H2O. The catalysed reaction is (5Z,8Z,11Z,14Z,17Z)-eicosapentaenoate + AH2 + O2 = (15R)-hydroxy-(5Z,8Z,11Z,13E,17Z)-eicosapentaenoate + A + H2O. It carries out the reaction (5Z,8Z,11Z,14Z,17Z)-eicosapentaenoate + AH2 + O2 = (15S)-hydroxy-(5Z,8Z,11Z,13E,17Z)-eicosapentaenoate + A + H2O. The enzyme catalyses (7Z,10Z,13Z,16Z,19Z)-docosapentaenoate + AH2 + O2 = 13R-hydroxy-(7Z,10Z,14E,16Z,19Z)-docosapentaenoate + A + H2O. It catalyses the reaction (4Z,7Z,10Z,13Z,16Z,19Z)-docosahexaenoate + AH2 + O2 = 13-hydroxy-(4Z,7Z,10Z,14E,16Z,19Z)-docosahexaenoate + A + H2O. The catalysed reaction is (5S)-hydroxy-(6E,8Z,11Z,14Z)-eicosatetraenoate + AH2 + O2 = (5S,15R)-dihydroxy-(6E,8Z,11Z,13E)-eicosatetraenoate + A + H2O. It carries out the reaction (4Z,7Z,10Z,13Z,16Z,19Z)-docosahexaenoate + AH2 + O2 = 17R-hydroxy-(4Z,7Z,10Z,13Z,15E,19Z)-docosahexaenoate + A + H2O. The enzyme catalyses (5S)-hydroxy-(6E,8Z,11Z,14Z)-eicosatetraenoate + AH2 + O2 = (5S,15S)-dihydroxy-(6E,8Z,11Z,13E)-eicosatetraenoate + A + H2O. It catalyses the reaction (5S)-hydroxy-(6E,8Z,11Z,14Z)-eicosatetraenoate + AH2 + O2 = (5S,11R)-dihydroxy-(6E,8Z,12E,14Z)-eicosatetraenoate + A + H2O. The catalysed reaction is 2-(5Z,8Z,11Z,14Z-eicosatetraenoyl)-glycerol + 2 O2 = 2-glyceryl-prostaglandin G2. It carries out the reaction 2-glyceryl-prostaglandin G2 + AH2 = 2-glyceryl-prostaglandin H2 + A + H2O. The enzyme catalyses (5Z,8Z,11Z,14Z)-eicosatetraenoate + O2 = (15R)-hydroperoxy-(5Z,8Z,11Z,13E)-eicosatetraenoate. It catalyses the reaction (5Z,8Z,11Z,14Z)-eicosatetraenoate + O2 = 11R-hydroperoxy-(5Z,8Z,12E,14Z)-eicosatetraenoate. The catalysed reaction is (9Z,12Z)-octadecadienoate + AH2 + O2 = (9R)-hydroxy-(10E,12Z)-octadecadienoate + A + H2O. It carries out the reaction (9Z,12Z)-octadecadienoate + AH2 + O2 = (9S)-hydroxy-(10E,12Z)-octadecadienoate + A + H2O. The enzyme catalyses (9Z,12Z)-octadecadienoate + AH2 + O2 = (13S)-hydroxy-(9Z,11E)-octadecadienoate + A + H2O. It catalyses the reaction (9Z,12Z)-octadecadienoate + AH2 + O2 = (13R)-hydroxy-(9Z,11E)-octadecadienoate + A + H2O. Its pathway is lipid metabolism; prostaglandin biosynthesis. Dual cyclooxygenase and peroxidase in the biosynthesis pathway of prostanoids, a class of C20 oxylipins mainly derived from arachidonate ((5Z,8Z,11Z,14Z)-eicosatetraenoate, AA, C20:4(n-6)), with a particular role in the inflammatory response. The cyclooxygenase activity oxygenates AA to the hydroperoxy endoperoxide prostaglandin G2 (PGG2), and the peroxidase activity reduces PGG2 to the hydroxy endoperoxide prostaglandin H2 (PGH2), the precursor of all 2-series prostaglandins and thromboxanes. This complex transformation is initiated by abstraction of hydrogen at carbon 13 (with S-stereochemistry), followed by insertion of molecular O2 to form the endoperoxide bridge between carbon 9 and 11 that defines prostaglandins. The insertion of a second molecule of O2 (bis-oxygenase activity) yields a hydroperoxy group in PGG2 that is then reduced to PGH2 by two electrons. Similarly catalyzes successive cyclooxygenation and peroxidation of dihomo-gamma-linoleate (DGLA, C20:3(n-6)) and eicosapentaenoate (EPA, C20:5(n-3)) to corresponding PGH1 and PGH3, the precursors of 1- and 3-series prostaglandins. In an alternative pathway of prostanoid biosynthesis, converts 2-arachidonoyl lysophopholipids to prostanoid lysophopholipids, which are then hydrolyzed by intracellular phospholipases to release free prostanoids. Metabolizes 2-arachidonoyl glycerol yielding the glyceryl ester of PGH2, a process that can contribute to pain response. Generates lipid mediators from n-3 and n-6 polyunsaturated fatty acids (PUFAs) via a lipoxygenase-type mechanism. Oxygenates PUFAs to hydroperoxy compounds and then reduces them to corresponding alcohols. Plays a role in the generation of resolution phase interaction products (resolvins) during both sterile and infectious inflammation. Metabolizes docosahexaenoate (DHA, C22:6(n-3)) to 17R-HDHA, a precursor of the D-series resolvins (RvDs). As a component of the biosynthetic pathway of E-series resolvins (RvEs), converts eicosapentaenoate (EPA, C20:5(n-3)) primarily to 18S-HEPE that is further metabolized by ALOX5 and LTA4H to generate 18S-RvE1 and 18S-RvE2. In vascular endothelial cells, converts docosapentaenoate (DPA, C22:5(n-3)) to 13R-HDPA, a precursor for 13-series resolvins (RvTs) shown to activate macrophage phagocytosis during bacterial infection. In activated leukocytes, contributes to oxygenation of hydroxyeicosatetraenoates (HETE) to diHETES (5,15-diHETE and 5,11-diHETE). Can also use linoleate (LA, (9Z,12Z)-octadecadienoate, C18:2(n-6)) as substrate and produce hydroxyoctadecadienoates (HODEs) in a regio- and stereospecific manner, being (9R)-HODE ((9R)-hydroxy-(10E,12Z)-octadecadienoate) and (13S)-HODE ((13S)-hydroxy-(9Z,11E)-octadecadienoate) its major products. During neuroinflammation, plays a role in neuronal secretion of specialized preresolving mediators (SPMs) 15R-lipoxin A4 that regulates phagocytic microglia. The chain is Prostaglandin G/H synthase 2 (PTGS2) from Cavia porcellus (Guinea pig).